The following is a 227-amino-acid chain: MAYPFQLGLQDATSPIMEELTNFHDHTLMIVFLISSLVLYIISLMLTTKLTHTSTMDAQEVETIWTILPAAILILIALPSLRILYMMDEINNPVLTVKTMGHQWYWSYEYTDYEDLCFDSYMIPTNDLKPGELRLLEVDNRVVLPMELPIRMLISSEDVLHSWTVPSLGLKTDAIPGRLNQATLSSNRPGLYYGQCSEICGSNHSFMPIVLEMVPLKYFENWSTSMI.

The Mitochondrial intermembrane segment spans residues 1–14 (MAYPFQLGLQDATS). The helical transmembrane segment at 15–45 (PIMEELTNFHDHTLMIVFLISSLVLYIISLM) threads the bilayer. Residues 46 to 59 (LTTKLTHTSTMDAQ) are Mitochondrial matrix-facing. Residues 60–87 (EVETIWTILPAAILILIALPSLRILYMM) traverse the membrane as a helical segment. Residues 88 to 227 (DEINNPVLTV…YFENWSTSMI (140 aa)) are Mitochondrial intermembrane-facing. 6 residues coordinate Cu cation: His-161, Cys-196, Glu-198, Cys-200, His-204, and Met-207. Residue Glu-198 coordinates Mg(2+). The residue at position 218 (Tyr-218) is a Phosphotyrosine.

This sequence belongs to the cytochrome c oxidase subunit 2 family. As to quaternary structure, component of the cytochrome c oxidase (complex IV, CIV), a multisubunit enzyme composed of 14 subunits. The complex is composed of a catalytic core of 3 subunits MT-CO1, MT-CO2 and MT-CO3, encoded in the mitochondrial DNA, and 11 supernumerary subunits COX4I, COX5A, COX5B, COX6A, COX6B, COX6C, COX7A, COX7B, COX7C, COX8 and NDUFA4, which are encoded in the nuclear genome. The complex exists as a monomer or a dimer and forms supercomplexes (SCs) in the inner mitochondrial membrane with NADH-ubiquinone oxidoreductase (complex I, CI) and ubiquinol-cytochrome c oxidoreductase (cytochrome b-c1 complex, complex III, CIII), resulting in different assemblies (supercomplex SCI(1)III(2)IV(1) and megacomplex MCI(2)III(2)IV(2)). Found in a complex with TMEM177, COA6, COX18, COX20, SCO1 and SCO2. Interacts with TMEM177 in a COX20-dependent manner. Interacts with COX20. Interacts with COX16. It depends on Cu cation as a cofactor.

It localises to the mitochondrion inner membrane. It catalyses the reaction 4 Fe(II)-[cytochrome c] + O2 + 8 H(+)(in) = 4 Fe(III)-[cytochrome c] + 2 H2O + 4 H(+)(out). Its function is as follows. Component of the cytochrome c oxidase, the last enzyme in the mitochondrial electron transport chain which drives oxidative phosphorylation. The respiratory chain contains 3 multisubunit complexes succinate dehydrogenase (complex II, CII), ubiquinol-cytochrome c oxidoreductase (cytochrome b-c1 complex, complex III, CIII) and cytochrome c oxidase (complex IV, CIV), that cooperate to transfer electrons derived from NADH and succinate to molecular oxygen, creating an electrochemical gradient over the inner membrane that drives transmembrane transport and the ATP synthase. Cytochrome c oxidase is the component of the respiratory chain that catalyzes the reduction of oxygen to water. Electrons originating from reduced cytochrome c in the intermembrane space (IMS) are transferred via the dinuclear copper A center (CU(A)) of subunit 2 and heme A of subunit 1 to the active site in subunit 1, a binuclear center (BNC) formed by heme A3 and copper B (CU(B)). The BNC reduces molecular oxygen to 2 water molecules using 4 electrons from cytochrome c in the IMS and 4 protons from the mitochondrial matrix. The chain is Cytochrome c oxidase subunit 2 (MT-CO2) from Arvicanthis somalicus (Neumann's grass rat).